Consider the following 267-residue polypeptide: Ribonuclease HII (267 aa).

In terms of domain architecture, RNase H type-2 spans 57 to 245 (WPVAGCDEVG…VVAARERHRA (189 aa)). The a divalent metal cation site is built by D63, E64, and D154.

The protein belongs to the RNase HII family. Mn(2+) serves as cofactor. Requires Mg(2+) as cofactor.

It localises to the cytoplasm. The enzyme catalyses Endonucleolytic cleavage to 5'-phosphomonoester.. In terms of biological role, endonuclease that specifically degrades the RNA of RNA-DNA hybrids. The protein is Ribonuclease HII of Nitrobacter hamburgensis (strain DSM 10229 / NCIMB 13809 / X14).